A 338-amino-acid polypeptide reads, in one-letter code: 1-aminocyclopropane-1-carboxylate deaminase (338 aa).

An N6-(pyridoxal phosphate)lysine modification is found at lysine 51. The Nucleophile role is filled by serine 78.

It belongs to the ACC deaminase/D-cysteine desulfhydrase family. In terms of assembly, homotrimer. Pyridoxal 5'-phosphate serves as cofactor.

It carries out the reaction 1-aminocyclopropane-1-carboxylate + H2O = 2-oxobutanoate + NH4(+). Its function is as follows. Catalyzes a cyclopropane ring-opening reaction, the irreversible conversion of 1-aminocyclopropane-1-carboxylate (ACC) to ammonia and alpha-ketobutyrate. Allows growth on ACC as a nitrogen source. This is 1-aminocyclopropane-1-carboxylate deaminase from Burkholderia ambifaria (strain MC40-6).